The chain runs to 946 residues: Atos homolog protein A (946 aa).

The segment at 24-32 is transactivation domain 1 (TAD1); it reads ALLITEGRT. Over residues 34-43 the composition is skewed to basic and acidic residues; the sequence is EHSVKGRTEG. Disordered stretches follow at residues 34 to 58, 246 to 271, 484 to 524, and 547 to 567; these read EHSV…APNK, SVTQ…FTKP, FQSS…TGNQ, and SCTD…SQKV. Polar residues-rich tracts occupy residues 247–267 and 484–500; these read VTQP…SQHA and FQSS…NENI. Composition is skewed to basic and acidic residues over residues 503–517 and 547–560; these read LPEK…HGEI and SCTD…KDNP. Residues 749–806 form a required for macropage invasion region; sequence LLGNFEESVLNYRFEPLGVVEGFTAEVGASGIFCPTHMTLPVKVSFYSVSDDNAPSPY. Positions 833 to 841 are transactivation domain 2 (TAD2); that stretch reads FNPNKTVVK.

Belongs to the ATOS family.

The protein localises to the nucleus. In terms of biological role, transcription regulator that syncronizes transcriptional and translational programs to promote macrophage invasion of tissues. This chain is Atos homolog protein A (atosa), found in Xenopus tropicalis (Western clawed frog).